We begin with the raw amino-acid sequence, 401 residues long: Sodium/glutamate symporter (401 aa).

The Periplasmic portion of the chain corresponds to 1–6; that stretch reads MFHLDT. The chain crosses the membrane as a helical span at residues 7 to 24; sequence LATLVAATLTLLLGRKLV. The Cytoplasmic portion of the chain corresponds to 25–32; sequence HSVSFLKK. The chain crosses the membrane as a helical span at residues 33–52; the sequence is YTIPEPVAGGLLVALALLVL. Residues 53–69 lie on the Periplasmic side of the membrane; it reads KKSMGWEVNFDMSLRDP. The helical transmembrane segment at 70–87 threads the bilayer; it reads LMLAFFATIGLNANIASL. Over 88 to 93 the chain is Cytoplasmic; sequence RAGGRV. Residues 94 to 116 traverse the membrane as a helical segment; it reads VGIFLIVVVGLLVMQNAIGIGMA. Residues 117 to 156 are Periplasmic-facing; sequence SLLGLDPLMGLLAGSITLSGGHGTGAAWSKLFIERYGFTN. The helical transmembrane segment at 157-179 threads the bilayer; sequence ATEVAMACATFGLVLGGLIGGPV. At 180 to 212 the chain is on the cytoplasmic side; sequence ARYLVKHSTTPNGIPDDQEVPTAFEKPDVGRMI. The chain crosses the membrane as a helical span at residues 213–235; that stretch reads TSLVLIETIALIAICLTVGKIVA. Over 236–244 the chain is Periplasmic; that stretch reads QLLAGTAFE. A helical membrane pass occupies residues 245-267; sequence LPTFVCVLFVGVILSNGLSIMGF. Residues 268–276 lie on the Cytoplasmic side of the membrane; that stretch reads YRVFERAVS. Residues 277-292 traverse the membrane as a helical segment; the sequence is VLGNVSLSLFLAMALM. The Periplasmic segment spans residues 293-301; that stretch reads GLKLWELAS. Residues 302–324 traverse the membrane as a helical segment; that stretch reads LALPMLAILVVQTIFMALYAIFV. The Cytoplasmic portion of the chain corresponds to 325 to 367; sequence TWRMMGKNYDAAVLAAGHCGFGLGATPTAIANMQAITERFGPS. Residues 368-390 form a helical membrane-spanning segment; that stretch reads HMAFLVVPMVGAFFIDIVNALVI. At 391-401 the chain is on the periplasmic side; that stretch reads KLYLMLPIFAG.

Belongs to the glutamate:Na(+) symporter (ESS) (TC 2.A.27) family.

It localises to the cell inner membrane. With respect to regulation, inhibited by the uncoupler carbonylcyanide m-chlorophenylhydrazone (CCCP) and the ionophore monensin. Its function is as follows. Catalyzes the sodium-dependent, binding-protein-independent transport of glutamate. In Escherichia coli (strain K12), this protein is Sodium/glutamate symporter.